Here is a 464-residue protein sequence, read N- to C-terminus: MSSLEKNIEYTSVSSIAGPLIVVEGIKGVAYGEIVSITCPSGEKRTGQVLEAREDVAVVQVFEGTTALNTSETKIRFVGETAKLGVSTDMLGRIFNGAGKPLDGGPDIIAEDKIDINGYPLNPVSRQSPNDFVQTGISTIDGTNTLVRGQKIPIFSGSGLPHNLLAAQIARQAKVRGSDEQFAVVFAAMGITAEESNYFMNEFKRTGALENAVVFINLADDPAIERILTPRIALTTAEYLAYEKGMHVLVIMTDITNYCEALREIAAARNEVPGRRGYPGYMYTDLATLYERAGRVKGKSGTVTQIPILTMPHDDITHPIPDLTGYITEGQIVLSRELNRKGIYPPVDVLPSLSRLAGNGVGEGKTRDDHSKVISQVYAGYAEGIGLRDLVAVVGEESLSERDRAYLKLADVFEKKFVQQGKDEDRSIEETLDIVWDILTILPEEELKRVSEDLIKKYHPNHKK.

Belongs to the ATPase alpha/beta chains family. Has multiple subunits with at least A(3), B(3), C, D, E, F, H, I and proteolipid K(x).

The protein localises to the cell membrane. Functionally, component of the A-type ATP synthase that produces ATP from ADP in the presence of a proton gradient across the membrane. The B chain is a regulatory subunit. The protein is A-type ATP synthase subunit B of Methanococcus aeolicus (strain ATCC BAA-1280 / DSM 17508 / OCM 812 / Nankai-3).